Reading from the N-terminus, the 658-residue chain is Alkyldihydroxyacetonephosphate synthase, peroxisomal (658 aa).

Over residues 1-24 (MAEAAAAAAAAAAAGETSASSGSA) the composition is skewed to low complexity. The tract at residues 1-37 (MAEAAAAAAAAAAAGETSASSGSAAERDPDQDRAGRR) is disordered. The transit peptide at 1–58 (MAEAAAAAAAAAAAGETSASSGSAAERDPDQDRAGRRLRVLSGHLLGRPQEALSTNEC) directs the protein to the peroxisome. A compositionally biased stretch (basic and acidic residues) spans 25–35 (AERDPDQDRAG). A Phosphoserine modification is found at serine 65. A Phosphothreonine modification is found at threonine 74. The residue at position 102 (lysine 102) is an N6-acetyllysine. In terms of domain architecture, FAD-binding PCMH-type spans 202–384 (FERIPDIVLW…TEATIKIRPT (183 aa)). Residues 234–240 (PIGGGTS), 303–309 (DSLEFST), and 316–319 (TRAS) each bind FAD. At lysine 347 the chain carries N6-acetyllysine. Position 368–374 (368–374 (EGTLGVI)) interacts with FAD. Arginine 515 lines the substrate pocket. Tyrosine 578 acts as the Proton donor/acceptor in catalysis. Important for enzyme activity stretches follow at residues 615 to 617 (HHH) and 654 to 658 (NRNLL).

It belongs to the FAD-binding oxidoreductase/transferase type 4 family. As to quaternary structure, homodimer. It depends on FAD as a cofactor.

The protein localises to the peroxisome membrane. The protein resides in the peroxisome. The enzyme catalyses a long chain fatty alcohol + a 1-acylglycerone 3-phosphate = a 1-O-alkylglycerone 3-phosphate + a long-chain fatty acid + H(+). It carries out the reaction hexadecan-1-ol + 1-hexadecanoylglycerone 3-phosphate = 1-O-hexadecylglycerone 3-phosphate + hexadecanoate + H(+). The catalysed reaction is 1-hexadecanoylglycerone 3-phosphate + a long-chain fatty acid = a 1-acylglycerone 3-phosphate + hexadecanoate. It participates in glycerolipid metabolism; ether lipid biosynthesis. Inhibited by N-ethylmaleimide, p-bromophenacylbromide, 2,4- dinitrofluorobenzene and divalent cations such as such as Mn(2+), Mg(2+) and Zn(2+). Inhibition by p-bromophenacylbromide is strongly pH dependent and is highest at alkaline conditions. Functionally, catalyzes the exchange of the acyl chain in acyl-dihydroxyacetonephosphate (acyl-DHAP) for a long chain fatty alcohol, yielding the first ether linked intermediate, i.e. alkyl-dihydroxyacetonephosphate (alkyl-DHAP), in the pathway of ether lipid biosynthesis. This Cavia porcellus (Guinea pig) protein is Alkyldihydroxyacetonephosphate synthase, peroxisomal (AGPS).